We begin with the raw amino-acid sequence, 38 residues long: Histatin-1 (38 aa).

Residues 1 to 38 (DSHEERHHGRHGHHKYGRKFHEKHHSHRGYRSNYLYDN) are disordered. The residue at position 2 (serine 2) is a Phosphoserine. Over residues 8–30 (HGRHGHHKYGRKFHEKHHSHRGY) the composition is skewed to basic residues.

Belongs to the histatin/statherin family.

It is found in the secreted. In terms of biological role, histatins (Hsts) are cationic and histidine-rich secreted peptides mainly synthesized by saliva glands of humans and higher primates. Hsts are considered to be major precursors of the protective proteinaceous structure on tooth surfaces (enamel pellicle). The sequence is that of Histatin-1 (HTN1) from Macaca fascicularis (Crab-eating macaque).